The primary structure comprises 358 residues: Protein-glutamate methylesterase/protein-glutamine glutaminase 1 (358 aa).

One can recognise a Response regulatory domain in the interval 8-125 (RVLIVDDSAV…ARGLEGYAEE (118 aa)). Asp-59 is subject to 4-aspartylphosphate. Residues 157–352 (PVPGSALRFR…LERVAERLIA (196 aa)) form the CheB-type methylesterase domain. Residues Ser-177, His-203, and Asp-299 contribute to the active site.

This sequence belongs to the CheB family. Phosphorylated by CheA. Phosphorylation of the N-terminal regulatory domain activates the methylesterase activity.

The protein resides in the cytoplasm. The catalysed reaction is [protein]-L-glutamate 5-O-methyl ester + H2O = L-glutamyl-[protein] + methanol + H(+). It catalyses the reaction L-glutaminyl-[protein] + H2O = L-glutamyl-[protein] + NH4(+). Functionally, involved in chemotaxis. Part of a chemotaxis signal transduction system that modulates chemotaxis in response to various stimuli. Catalyzes the demethylation of specific methylglutamate residues introduced into the chemoreceptors (methyl-accepting chemotaxis proteins or MCP) by CheR. Also mediates the irreversible deamidation of specific glutamine residues to glutamic acid. This Xanthomonas campestris pv. campestris (strain ATCC 33913 / DSM 3586 / NCPPB 528 / LMG 568 / P 25) protein is Protein-glutamate methylesterase/protein-glutamine glutaminase 1.